A 102-amino-acid chain; its full sequence is Large ribosomal subunit protein bL21 (102 aa).

This sequence belongs to the bacterial ribosomal protein bL21 family. Part of the 50S ribosomal subunit. Contacts protein L20.

In terms of biological role, this protein binds to 23S rRNA in the presence of protein L20. The polypeptide is Large ribosomal subunit protein bL21 (Trichlorobacter lovleyi (strain ATCC BAA-1151 / DSM 17278 / SZ) (Geobacter lovleyi)).